We begin with the raw amino-acid sequence, 227 residues long: Ribonuclease 3 (227 aa).

In terms of domain architecture, RNase III spans 3–130; that stretch reads TNAISKIIKY…LIGAIYLDGG (128 aa). Glu-43 contacts Mg(2+). Residue Asp-47 is part of the active site. Mg(2+) contacts are provided by Asn-116 and Glu-119. The active site involves Glu-119. The 70-residue stretch at 155–224 folds into the DRBM domain; it reads DAKTILQEWA…ASLMLAKINY (70 aa).

The protein belongs to the ribonuclease III family. Homodimer. Mg(2+) serves as cofactor.

The protein resides in the cytoplasm. It carries out the reaction Endonucleolytic cleavage to 5'-phosphomonoester.. In terms of biological role, digests double-stranded RNA. Involved in the processing of primary rRNA transcript to yield the immediate precursors to the large and small rRNAs (23S and 16S). Processes some mRNAs, and tRNAs when they are encoded in the rRNA operon. Processes pre-crRNA and tracrRNA of type II CRISPR loci if present in the organism. This chain is Ribonuclease 3, found in Ehrlichia ruminantium (strain Welgevonden).